Here is a 476-residue protein sequence, read N- to C-terminus: Glycogen synthase (476 aa).

Lys-15 provides a ligand contact to ADP-alpha-D-glucose.

Belongs to the glycosyltransferase 1 family. Bacterial/plant glycogen synthase subfamily.

The enzyme catalyses [(1-&gt;4)-alpha-D-glucosyl](n) + ADP-alpha-D-glucose = [(1-&gt;4)-alpha-D-glucosyl](n+1) + ADP + H(+). It functions in the pathway glycan biosynthesis; glycogen biosynthesis. Synthesizes alpha-1,4-glucan chains using ADP-glucose. This chain is Glycogen synthase, found in Streptococcus equi subsp. equi (strain 4047).